Here is a 478-residue protein sequence, read N- to C-terminus: Protein nucleotidyltransferase YdiU (478 aa).

ATP is bound by residues Gly84, Gly86, Arg87, Lys107, Asp119, Gly120, Arg170, and Arg177. Asp246 acts as the Proton acceptor in catalysis. Residues Asn247 and Asp256 each contribute to the Mg(2+) site. Asp256 contributes to the ATP binding site.

This sequence belongs to the SELO family. Mg(2+) serves as cofactor. It depends on Mn(2+) as a cofactor.

The enzyme catalyses L-seryl-[protein] + ATP = 3-O-(5'-adenylyl)-L-seryl-[protein] + diphosphate. It catalyses the reaction L-threonyl-[protein] + ATP = 3-O-(5'-adenylyl)-L-threonyl-[protein] + diphosphate. It carries out the reaction L-tyrosyl-[protein] + ATP = O-(5'-adenylyl)-L-tyrosyl-[protein] + diphosphate. The catalysed reaction is L-histidyl-[protein] + UTP = N(tele)-(5'-uridylyl)-L-histidyl-[protein] + diphosphate. The enzyme catalyses L-seryl-[protein] + UTP = O-(5'-uridylyl)-L-seryl-[protein] + diphosphate. It catalyses the reaction L-tyrosyl-[protein] + UTP = O-(5'-uridylyl)-L-tyrosyl-[protein] + diphosphate. Nucleotidyltransferase involved in the post-translational modification of proteins. It can catalyze the addition of adenosine monophosphate (AMP) or uridine monophosphate (UMP) to a protein, resulting in modifications known as AMPylation and UMPylation. The sequence is that of Protein nucleotidyltransferase YdiU from Escherichia coli O9:H4 (strain HS).